The primary structure comprises 453 residues: Cobyrinate a,c-diamide synthase (453 aa).

The GATase cobBQ-type domain occupies 250 to 440; it reads RIAVPFDEAF…IHTHTACLPD (191 aa). Cysteine 332 serves as the catalytic Nucleophile.

It belongs to the CobB/CbiA family. It depends on Mg(2+) as a cofactor.

It catalyses the reaction cob(II)yrinate + 2 L-glutamine + 2 ATP + 2 H2O = cob(II)yrinate a,c diamide + 2 L-glutamate + 2 ADP + 2 phosphate + 2 H(+). It carries out the reaction Ni-sirohydrochlorin + 2 L-glutamine + 2 ATP + 2 H2O = Ni-sirohydrochlorin a,c-diamide + 2 L-glutamate + 2 ADP + 2 phosphate + 2 H(+). The protein operates within cofactor biosynthesis; adenosylcobalamin biosynthesis; cob(II)yrinate a,c-diamide from sirohydrochlorin (anaerobic route): step 10/10. Functionally, catalyzes the ATP-dependent amidation of the two carboxylate groups at positions a and c of cobyrinate, using either L-glutamine or ammonia as the nitrogen source. Involved in the biosynthesis of the unique nickel-containing tetrapyrrole coenzyme F430, the prosthetic group of methyl-coenzyme M reductase (MCR), which plays a key role in methanogenesis and anaerobic methane oxidation. Catalyzes the ATP-dependent amidation of the two carboxylate groups at positions a and c of Ni-sirohydrochlorin, using L-glutamine or ammonia as the nitrogen source. The protein is Cobyrinate a,c-diamide synthase of Methanosphaera stadtmanae (strain ATCC 43021 / DSM 3091 / JCM 11832 / MCB-3).